Consider the following 206-residue polypeptide: ATP-dependent Clp protease proteolytic subunit 1 (206 aa).

Serine 100 functions as the Nucleophile in the catalytic mechanism. Residue histidine 125 is part of the active site.

This sequence belongs to the peptidase S14 family. Fourteen ClpP subunits assemble into 2 heptameric rings which stack back to back to give a disk-like structure with a central cavity, resembling the structure of eukaryotic proteasomes.

The protein localises to the cytoplasm. It carries out the reaction Hydrolysis of proteins to small peptides in the presence of ATP and magnesium. alpha-casein is the usual test substrate. In the absence of ATP, only oligopeptides shorter than five residues are hydrolyzed (such as succinyl-Leu-Tyr-|-NHMec, and Leu-Tyr-Leu-|-Tyr-Trp, in which cleavage of the -Tyr-|-Leu- and -Tyr-|-Trp bonds also occurs).. Its function is as follows. Cleaves peptides in various proteins in a process that requires ATP hydrolysis. Has a chymotrypsin-like activity. Plays a major role in the degradation of misfolded proteins. This chain is ATP-dependent Clp protease proteolytic subunit 1, found in Myxococcus xanthus (strain DK1622).